The sequence spans 382 residues: MRVLAVATPALGHLFPAVPLLWALRARGDEVLVVTGGDALRVAEAGLPVVDALPGETLTTLFGAYQETDPAFFVALRRSPMTTLRDLAPVLAYLAGRLLEPARRAAERWRPDAILATHGQAAGAVVAAEHGIPLVEHGFGFVRSDGAQEAVRQLLAERLGPAGSEPPPERYFLDIAVPSMTSAIEGMSLRAVPYNGGAVLPLSGASVGGRPPRPRVLVTAGTQLLHTHGAGALAWLPEVAAGHEAEFLLAAGGADLRDLGRLPPHVRVLDWTPLATVLPTCSAVVHHGGSGTTLAALAAGVPQLVSPALADNHINARAVADRGAGLETAVPDATTLTALLREPAFAKAAREVADELRSLPAPADVAARLHTAFGLPTTQGDA.

Belongs to the glycosyltransferase 28 family.

It catalyses the reaction 8-demethyltetracenomycin C + dTDP-beta-L-rhamnose = 8-demethyl-8-alpha-L-rhamnosyl-tetracenomycin C + dTDP + H(+). It participates in antibiotic biosynthesis. In terms of biological role, glycosyltransferase that transfers an L-rhamnose moiety from dTDP-L-rhamnose to the elloramycin aglycone 8-demethyl-tetracenomycin C (8DMTC) in elloramycin biosynthesis, an antitumor polyketide. Possesses donor substrate flexibility: able to transfer at least 11 different sugars to 8DMTC, such as NDP-D-glucose, as well as NDP-L-digitoxose, including both L- and D-isomeric forms of some sugars. This Streptomyces olivaceus protein is Elloramycin glycosyltransferase ElmGT.